The following is a 243-amino-acid chain: MENQKEKILVVDDEASIRRILETRLTIIGYEVITASNGEEALIIFRKEYPSLVVLDVMMPKLDGYGVCQELRKESDVPIIMLTALGEVCDRITGLEIGADDYVVKPFSPKELEARIRSVLRRADKITTNLGVPNSGIISIGFLKIDTNKRQVYKNNERVRLTGMEFSLLELLVSKAGEPFSRASILQEVWGYTPERHVDTRVVDVHISRLRAKLEDDPSNPDLILTARGTGYLFQRIIEMNKL.

The Response regulatory domain maps to 7–120 (KILVVDDEAS…ELEARIRSVL (114 aa)). Position 56 is a 4-aspartylphosphate (Asp-56). Residues 76 to 94 (DVPIIMLTALGEVCDRITG) constitute a DNA-binding region (H-T-H motif). A DNA-binding region (ompR/PhoB-type) is located at residues 135 to 236 (SGIISIGFLK…ARGTGYLFQR (102 aa)).

It localises to the plastid. The protein localises to the chloroplast. Probable promoter-specific protein mediating the interaction between DNA and RNA polymerase. This is Probable transcriptional regulator ycf27 (ycf27) from Porphyra purpurea (Red seaweed).